Reading from the N-terminus, the 197-residue chain is Large ribosomal subunit protein bL25 (197 aa).

The protein belongs to the bacterial ribosomal protein bL25 family. CTC subfamily. In terms of assembly, part of the 50S ribosomal subunit; part of the 5S rRNA/L5/L18/L25 subcomplex. Contacts the 5S rRNA. Binds to the 5S rRNA independently of L5 and L18.

Functionally, this is one of the proteins that binds to the 5S RNA in the ribosome where it forms part of the central protuberance. The chain is Large ribosomal subunit protein bL25 from Lawsonia intracellularis (strain PHE/MN1-00).